The chain runs to 109 residues: Parvalbumin alpha (109 aa).

2 consecutive EF-hand domains span residues 38–73 (KTDA…FSAH) and 77–109 (LNDT…VAQA). Ca(2+) contacts are provided by aspartate 51, aspartate 53, serine 55, glutamate 62, aspartate 90, aspartate 92, aspartate 94, lysine 96, and glutamate 101.

The protein belongs to the parvalbumin family.

Its function is as follows. In muscle, parvalbumin is thought to be involved in relaxation after contraction. It binds two calcium ions. In Triakis semifasciata (Leopard shark), this protein is Parvalbumin alpha.